A 507-amino-acid polypeptide reads, in one-letter code: ATP synthase subunit alpha (507 aa).

171–178 is an ATP binding site; the sequence is GDRQTGKT.

It belongs to the ATPase alpha/beta chains family. As to quaternary structure, F-type ATPases have 2 components, CF(1) - the catalytic core - and CF(0) - the membrane proton channel. CF(1) has five subunits: alpha(3), beta(3), gamma(1), delta(1), epsilon(1). CF(0) has three main subunits: a(1), b(2) and c(9-12). The alpha and beta chains form an alternating ring which encloses part of the gamma chain. CF(1) is attached to CF(0) by a central stalk formed by the gamma and epsilon chains, while a peripheral stalk is formed by the delta and b chains.

The protein localises to the cell inner membrane. The catalysed reaction is ATP + H2O + 4 H(+)(in) = ADP + phosphate + 5 H(+)(out). Its function is as follows. Produces ATP from ADP in the presence of a proton gradient across the membrane. The alpha chain is a regulatory subunit. The chain is ATP synthase subunit alpha from Bdellovibrio bacteriovorus (strain ATCC 15356 / DSM 50701 / NCIMB 9529 / HD100).